Consider the following 1252-residue polypeptide: LRR receptor-like serine/threonine-protein kinase GSO2 (1252 aa).

The N-terminal stretch at 1–22 (MQQNSVLLALFFLCFSSGLGSG) is a signal peptide. At 23–876 (QPGQRDDLQT…QRSLSPKTVV (854 aa)) the chain is on the extracellular side. Asparagine 62, asparagine 77, and asparagine 117 each carry an N-linked (GlcNAc...) asparagine glycan. LRR repeat units lie at residues 94 to 118 (FNNLIHIDLSSNRLVGPIPTTLSNL), 120 to 143 (SSLESLHLFSNLLSGDIPSQLGSL), 144 to 166 (VNLKSLKLGDNELNGTIPETFGN), 168 to 190 (VNLQMLALASCRLTGLIPSRFGR), 191 to 215 (LVQLQTLILQDNELEGPIPAEIGNC), 217 to 239 (SLALFAAAFNRLNGSLPAELNRL), 240 to 263 (KNLQTLNLGDNSFSGEIPSQLGDL), 265 to 286 (SIQYLNLIGNQLQGLIPKRLTE), 287 to 310 (LANLQTLDLSSNNLTGVIHEEFWR), and 312 to 335 (NQLEFLVLAKNRLSGSLPKTICSN). A glycan (N-linked (GlcNAc...) asparagine) is linked at asparagine 157. 2 N-linked (GlcNAc...) asparagine glycosylation sites follow: asparagine 214 and asparagine 229. N-linked (GlcNAc...) asparagine glycosylation is present at asparagine 299. Asparagine 336 carries an N-linked (GlcNAc...) asparagine glycan. 21 LRR repeats span residues 337-360 (TSLKQLFLSETQLSGEIPAEISNC), 361-384 (QSLKLLDLSNNTLTGQIPDSLFQL), 386-408 (ELTNLYLNNNSLEGTLSSSISNL), 409-433 (TNLQEFTLYHNNLEGKVPKEIGFLG), 435-456 (LEIMYLYENRFSGEMPVEIGNC), 457-480 (TRLQEIDWYGNRLSGEIPSSIGRL), 481-504 (KDLTRLHLRENELVGNIPASLGNC), 506-528 (QMTVIDLADNQLSGSIPSSFGFL), 529-552 (TALELFMIYNNSLQGNLPDSLINL), 554-575 (NLTRINFSSNKFNGSISPLCGS), 577-599 (SYLSFDVTENGFEGDIPLELGKS), 600-622 (TNLDRLRLGKNQFTGRIPRTFGK), 623-648 (ISELSLLDISRNSLSGIIPVELGLCK), 650-670 (LTHIDLNNNYLSGVIPTWLGK), 671-695 (LPLLGELKLSSNKFVGSLPTEIFSL), 697-719 (NILTLFLDGNSLNGSIPQEIGNL), 720-743 (QALNALNLEENQLSGPLPSTIGKL), 745-767 (KLFELRLSRNALTGEIPVEIGQL), 768-792 (QDLQSALDLSYNNFTGRIPSTISTL), 793-816 (PKLESLDLSHNQLVGEVPGQIGDM), and 818-839 (SLGYLNLSYNNLEGKLKKQFSR). N-linked (GlcNAc...) asparagine glycosylation is found at asparagine 370, asparagine 394, and asparagine 407. N-linked (GlcNAc...) asparagine glycosylation occurs at asparagine 455. 4 N-linked (GlcNAc...) asparagine glycosylation sites follow: asparagine 538, asparagine 554, asparagine 559, and asparagine 566. The N-linked (GlcNAc...) asparagine glycan is linked to asparagine 709. Asparagine 780 carries N-linked (GlcNAc...) asparagine glycosylation. N-linked (GlcNAc...) asparagine glycosylation is present at asparagine 823. Residues 877 to 897 (IISAISSLAAIALMVLVIILF) traverse the membrane as a helical segment. At 898 to 1252 (FKQNHDLFKK…YREMQTDTDK (355 aa)) the chain is on the cytoplasmic side. Threonine 945 carries the phosphothreonine modification. Positions 948-1232 (LNEEFMIGSG…PSSRQASEYL (285 aa)) constitute a Protein kinase domain. Residues 954–962 (IGSGGSGKV) and lysine 976 each bind ATP. Phosphotyrosine is present on residues tyrosine 1024 and tyrosine 1066. Aspartate 1079 (proton acceptor) is an active-site residue. Serine 1114 bears the Phosphoserine mark. Phosphotyrosine is present on residues tyrosine 1124 and tyrosine 1131.

It belongs to the protein kinase superfamily. Ser/Thr protein kinase family. As to quaternary structure, interacts with CIF1 and CIF2. Mostly expressed in siliques, seeds, developing embryos and seedlings, detected in flower buds, but not in roots, leaves or stems.

It is found in the cell membrane. It catalyses the reaction L-seryl-[protein] + ATP = O-phospho-L-seryl-[protein] + ADP + H(+). It carries out the reaction L-threonyl-[protein] + ATP = O-phospho-L-threonyl-[protein] + ADP + H(+). Its function is as follows. Together with GSO1, receptor-like serine/threonine-kinase required during the development of the epidermal surface in embryos and cotyledons. Involved in the nuclear division phase of megagametogenesis. In coordination with GSO2, regulates root growth through control of cell division and cell fate specification. Controls seedling root growth by modulating sucrose response after germination. Receptor of the peptide hormones CIF1 and CIF2 required for contiguous Casparian strip diffusion barrier formation in roots. The sequence is that of LRR receptor-like serine/threonine-protein kinase GSO2 from Arabidopsis thaliana (Mouse-ear cress).